Here is a 461-residue protein sequence, read N- to C-terminus: Kynurenine 3-monooxygenase (461 aa).

Residues 17–18, 37–39, and Ala-56 each bind FAD; these read LA and ERR. The L-kynurenine site is built by Arg-84 and Tyr-98. FAD contacts are provided by residues Arg-111, Leu-135, Asp-311, and 324 to 325; that span reads MN. Positions 369 and 404 each coordinate L-kynurenine.

This sequence belongs to the aromatic-ring hydroxylase family. KMO subfamily. FAD serves as cofactor.

The enzyme catalyses L-kynurenine + NADPH + O2 + H(+) = 3-hydroxy-L-kynurenine + NADP(+) + H2O. The protein operates within cofactor biosynthesis; NAD(+) biosynthesis; quinolinate from L-kynurenine: step 1/3. It functions in the pathway siderophore biosynthesis; quinolobactin biosynthesis. Its function is as follows. Catalyzes the hydroxylation of L-kynurenine (L-Kyn) to form 3-hydroxy-L-kynurenine (L-3OHKyn). Probably required for the synthesis of quinolinic acid and the siderophore quinolobactin. This Pseudomonas fluorescens protein is Kynurenine 3-monooxygenase.